A 247-amino-acid polypeptide reads, in one-letter code: Triosephosphate isomerase (247 aa).

A substrate-binding site is contributed by 9-11; the sequence is NWK. The active-site Electrophile is His93. Residue Glu163 is the Proton acceptor of the active site. Residues Gly169, Ser209, and 230–231 each bind substrate; that span reads GG.

Belongs to the triosephosphate isomerase family. As to quaternary structure, homodimer.

The protein resides in the cytoplasm. The enzyme catalyses D-glyceraldehyde 3-phosphate = dihydroxyacetone phosphate. It functions in the pathway carbohydrate biosynthesis; gluconeogenesis. Its pathway is carbohydrate degradation; glycolysis; D-glyceraldehyde 3-phosphate from glycerone phosphate: step 1/1. Functionally, involved in the gluconeogenesis. Catalyzes stereospecifically the conversion of dihydroxyacetone phosphate (DHAP) to D-glyceraldehyde-3-phosphate (G3P). In Dinoroseobacter shibae (strain DSM 16493 / NCIMB 14021 / DFL 12), this protein is Triosephosphate isomerase.